Reading from the N-terminus, the 75-residue chain is Large ribosomal subunit protein bL31 (75 aa).

Zn(2+)-binding residues include cysteine 16, cysteine 18, cysteine 37, and cysteine 40.

Belongs to the bacterial ribosomal protein bL31 family. Type A subfamily. Part of the 50S ribosomal subunit. The cofactor is Zn(2+).

Functionally, binds the 23S rRNA. The polypeptide is Large ribosomal subunit protein bL31 (Baumannia cicadellinicola subsp. Homalodisca coagulata).